The sequence spans 624 residues: tRNA uridine 5-carboxymethylaminomethyl modification enzyme MnmG (624 aa).

FAD contacts are provided by residues 14–19 (GGGHAG), Val-126, and Ser-181. 273–287 (GPRYCPSIEDKVVRF) contacts NAD(+). Position 370 (Gln-370) interacts with FAD.

It belongs to the MnmG family. Homodimer. Heterotetramer of two MnmE and two MnmG subunits. FAD is required as a cofactor.

It is found in the cytoplasm. Functionally, NAD-binding protein involved in the addition of a carboxymethylaminomethyl (cmnm) group at the wobble position (U34) of certain tRNAs, forming tRNA-cmnm(5)s(2)U34. This Geotalea uraniireducens (strain Rf4) (Geobacter uraniireducens) protein is tRNA uridine 5-carboxymethylaminomethyl modification enzyme MnmG.